The chain runs to 207 residues: Large ribosomal subunit protein uL4 (207 aa).

It belongs to the universal ribosomal protein uL4 family. Part of the 50S ribosomal subunit.

In terms of biological role, one of the primary rRNA binding proteins, this protein initially binds near the 5'-end of the 23S rRNA. It is important during the early stages of 50S assembly. It makes multiple contacts with different domains of the 23S rRNA in the assembled 50S subunit and ribosome. Functionally, forms part of the polypeptide exit tunnel. This chain is Large ribosomal subunit protein uL4, found in Erythrobacter litoralis (strain HTCC2594).